Reading from the N-terminus, the 549-residue chain is MKNINPTQTAAWQALQKHFDEMKDVTIADLFAKDGDRFSKFSVTFDDQMLVDYSKNRITEETLAKLQDLAKECDLAGAIKSMFSGEKINRTENRAVLHVALRNRSNTPILVDGKDVMPEVNAVLEKMKTFSEAIISGEWKGYTGKAITDVVNIGIGGSDLGPYMVTEALRPYKNHLNMHFVSNVDGTHIAEVLKKVNPETTLFLVASKTFTTQETMTNAHSARDWFLKAAGDEKHVAKHFAALSTNAKAVGEFGIDTANMFEFWDWVGGRYSLWSAIGLSIVLSIGFDNFVELLSGAHAMDKHFSTTPAEKNLPVLLALIGIWYNNFFGAETEAILPYDQYMHRFAAYFQQGNMESNGKYVDRNGNVVDYQTGPIIWGEPGTNGQHAFYQLIHQGTKMVPCDFIAPAITHNPLSDHHQKLLSNFFAQTEALAFGKSREVVEQEYRDQGKDPATLDYVVPFKVFEGNRPTNSILLREITPFSLGALIALYEHKIFTQGVILNIFTFDQWGVELGKQLANRILPELKDDKEISSHDSSTNGLINRYKAWRG.

Residues Lys-80, Lys-228, and Lys-234 each carry the N6-acetyllysine modification. Catalysis depends on Glu-355, which acts as the Proton donor. Residues His-386 and Lys-514 contribute to the active site.

This sequence belongs to the GPI family.

Its subcellular location is the cytoplasm. The catalysed reaction is alpha-D-glucose 6-phosphate = beta-D-fructose 6-phosphate. It participates in carbohydrate biosynthesis; gluconeogenesis. The protein operates within carbohydrate degradation; glycolysis; D-glyceraldehyde 3-phosphate and glycerone phosphate from D-glucose: step 2/4. In terms of biological role, catalyzes the reversible isomerization of glucose-6-phosphate to fructose-6-phosphate. This Escherichia coli (strain SMS-3-5 / SECEC) protein is Glucose-6-phosphate isomerase.